The sequence spans 226 residues: ATP synthase F(0) complex subunit a (226 aa).

6 consecutive transmembrane segments (helical) span residues Leu-5–Leu-25, Trp-68–Leu-88, Gln-97–Phe-117, Ile-138–Val-158, Leu-160–Ala-180, and Thr-189–Ile-209.

Belongs to the ATPase A chain family. As to quaternary structure, component of the ATP synthase complex composed at least of ATP5F1A/subunit alpha, ATP5F1B/subunit beta, ATP5MC1/subunit c (homooctomer), MT-ATP6/subunit a, MT-ATP8/subunit 8, ATP5ME/subunit e, ATP5MF/subunit f, ATP5MG/subunit g, ATP5MK/subunit k, ATP5MJ/subunit j, ATP5F1C/subunit gamma, ATP5F1D/subunit delta, ATP5F1E/subunit epsilon, ATP5PF/subunit F6, ATP5PB/subunit b, ATP5PD/subunit d, ATP5PO/subunit OSCP. ATP synthase complex consists of a soluble F(1) head domain (subunits alpha(3) and beta(3)) - the catalytic core - and a membrane F(0) domain - the membrane proton channel (subunits c, a, 8, e, f, g, k and j). These two domains are linked by a central stalk (subunits gamma, delta, and epsilon) rotating inside the F1 region and a stationary peripheral stalk (subunits F6, b, d, and OSCP). Interacts with DNAJC30; interaction is direct.

It is found in the mitochondrion inner membrane. It catalyses the reaction H(+)(in) = H(+)(out). Its function is as follows. Subunit a, of the mitochondrial membrane ATP synthase complex (F(1)F(0) ATP synthase or Complex V) that produces ATP from ADP in the presence of a proton gradient across the membrane which is generated by electron transport complexes of the respiratory chain. ATP synthase complex consist of a soluble F(1) head domain - the catalytic core - and a membrane F(1) domain - the membrane proton channel. These two domains are linked by a central stalk rotating inside the F(1) region and a stationary peripheral stalk. During catalysis, ATP synthesis in the catalytic domain of F(1) is coupled via a rotary mechanism of the central stalk subunits to proton translocation. With the subunit c (ATP5MC1), forms the proton-conducting channel in the F(0) domain, that contains two crucial half-channels (inlet and outlet) that facilitate proton movement from the mitochondrial intermembrane space (IMS) into the matrix. Protons are taken up via the inlet half-channel and released through the outlet half-channel, following a Grotthuss mechanism. The chain is ATP synthase F(0) complex subunit a from Gorilla gorilla gorilla (Western lowland gorilla).